A 347-amino-acid polypeptide reads, in one-letter code: Eukaryotic translation initiation factor 3 subunit I (347 aa).

WD repeat units lie at residues 8–49 (GHER…GTYE), 50–89 (GHNG…CLFT), 146–186 (TFSG…PESG), 198–237 (AHTD…VIKT), 239–278 (ATET…GRFE), and 295–336 (GHFG…SKLY).

It belongs to the eIF-3 subunit I family. In terms of assembly, component of the eukaryotic translation initiation factor 3 (eIF-3) complex.

It localises to the cytoplasm. Component of the eukaryotic translation initiation factor 3 (eIF-3) complex, which is involved in protein synthesis of a specialized repertoire of mRNAs and, together with other initiation factors, stimulates binding of mRNA and methionyl-tRNAi to the 40S ribosome. The eIF-3 complex specifically targets and initiates translation of a subset of mRNAs involved in cell proliferation. This is Eukaryotic translation initiation factor 3 subunit I from Mycosarcoma maydis (Corn smut fungus).